The sequence spans 272 residues: Acetyl-coenzyme A carboxylase carboxyl transferase subunit alpha (272 aa).

The CoA carboxyltransferase C-terminal domain occupies Met1–Glu248.

Belongs to the AccA family. Acetyl-CoA carboxylase is a heterohexamer composed of biotin carboxyl carrier protein (AccB), biotin carboxylase (AccC) and two subunits each of ACCase subunit alpha (AccA) and ACCase subunit beta (AccD).

Its subcellular location is the cytoplasm. The enzyme catalyses N(6)-carboxybiotinyl-L-lysyl-[protein] + acetyl-CoA = N(6)-biotinyl-L-lysyl-[protein] + malonyl-CoA. It functions in the pathway lipid metabolism; malonyl-CoA biosynthesis; malonyl-CoA from acetyl-CoA: step 1/1. Its function is as follows. Component of the acetyl coenzyme A carboxylase (ACC) complex. First, biotin carboxylase catalyzes the carboxylation of biotin on its carrier protein (BCCP) and then the CO(2) group is transferred by the carboxyltransferase to acetyl-CoA to form malonyl-CoA. The chain is Acetyl-coenzyme A carboxylase carboxyl transferase subunit alpha from Clostridium beijerinckii (strain ATCC 51743 / NCIMB 8052) (Clostridium acetobutylicum).